The sequence spans 275 residues: Dihydropteroate synthase (275 aa).

One can recognise a Pterin-binding domain in the interval 15–267 (PQIMGILNFT…DVAATSDMLK (253 aa)). Asparagine 22 contacts Mg(2+). (7,8-dihydropterin-6-yl)methyl diphosphate is bound by residues threonine 62, aspartate 96, asparagine 115, aspartate 185, lysine 221, and 255 to 257 (RVH).

This sequence belongs to the DHPS family. As to quaternary structure, homodimer. The cofactor is Mg(2+).

It carries out the reaction (7,8-dihydropterin-6-yl)methyl diphosphate + 4-aminobenzoate = 7,8-dihydropteroate + diphosphate. Its pathway is cofactor biosynthesis; tetrahydrofolate biosynthesis; 7,8-dihydrofolate from 2-amino-4-hydroxy-6-hydroxymethyl-7,8-dihydropteridine diphosphate and 4-aminobenzoate: step 1/2. Its function is as follows. Catalyzes the condensation of para-aminobenzoate (pABA) with 6-hydroxymethyl-7,8-dihydropterin diphosphate (DHPt-PP) to form 7,8-dihydropteroate (H2Pte), the immediate precursor of folate derivatives. The sequence is that of Dihydropteroate synthase (folP-A) from Haemophilus influenzae (strain ATCC 51907 / DSM 11121 / KW20 / Rd).